A 538-amino-acid polypeptide reads, in one-letter code: Methyl-accepting chemotaxis protein NahY (538 aa).

Residues M1–R9 lie on the Cytoplasmic side of the membrane. The helical transmembrane segment at L10 to S30 threads the bilayer. The Periplasmic segment spans residues A31–T187. A helical transmembrane segment spans residues M188 to I208. One can recognise an HAMP domain in the interval R209–Q261. At R209–M538 the chain is on the cytoplasmic side. The 237-residue stretch at S266–S502 folds into the Methyl-accepting transducer domain.

This sequence belongs to the methyl-accepting chemotaxis (MCP) protein family.

It localises to the cell inner membrane. In terms of biological role, chemotactic-signal transducers respond to changes in the concentration of attractants and repellents in the environment, transduce a signal from the outside to the inside of the cell, and facilitate sensory adaptation through the variation of the level of methylation. Chemoreceptor for naphthalene or a related compound. May facilitate biodegradation. The polypeptide is Methyl-accepting chemotaxis protein NahY (nahY) (Pseudomonas putida (Arthrobacter siderocapsulatus)).